The chain runs to 355 residues: Peptide chain release factor 1 (355 aa).

An N5-methylglutamine modification is found at glutamine 229. The tract at residues 280-299 (LDRERSAARKGQVGSGDRSE) is disordered.

Belongs to the prokaryotic/mitochondrial release factor family. In terms of processing, methylated by PrmC. Methylation increases the termination efficiency of RF1.

The protein resides in the cytoplasm. Its function is as follows. Peptide chain release factor 1 directs the termination of translation in response to the peptide chain termination codons UAG and UAA. The protein is Peptide chain release factor 1 of Parvibaculum lavamentivorans (strain DS-1 / DSM 13023 / NCIMB 13966).